Here is a 187-residue protein sequence, read N- to C-terminus: Elongation factor P (187 aa).

This sequence belongs to the elongation factor P family.

The protein resides in the cytoplasm. It participates in protein biosynthesis; polypeptide chain elongation. Functionally, involved in peptide bond synthesis. Stimulates efficient translation and peptide-bond synthesis on native or reconstituted 70S ribosomes in vitro. Probably functions indirectly by altering the affinity of the ribosome for aminoacyl-tRNA, thus increasing their reactivity as acceptors for peptidyl transferase. In Corynebacterium diphtheriae (strain ATCC 700971 / NCTC 13129 / Biotype gravis), this protein is Elongation factor P.